The sequence spans 163 residues: UPF0523 protein B (163 aa).

The protein belongs to the UPF0523 family.

The sequence is that of UPF0523 protein B from Dictyostelium discoideum (Social amoeba).